The chain runs to 306 residues: Ornithine carbamoyltransferase 1, anabolic (306 aa).

Carbamoyl phosphate contacts are provided by residues 53–56 (STRT), glutamine 80, arginine 104, and 131–134 (HPCQ). L-ornithine-binding positions include asparagine 162, aspartate 219, and 223–224 (SM). Carbamoyl phosphate contacts are provided by residues 259-260 (CL) and arginine 287.

Belongs to the aspartate/ornithine carbamoyltransferase superfamily. OTCase family. In terms of assembly, homotrimer.

Its subcellular location is the cytoplasm. The enzyme catalyses carbamoyl phosphate + L-ornithine = L-citrulline + phosphate + H(+). The protein operates within amino-acid biosynthesis; L-arginine biosynthesis; L-arginine from L-ornithine and carbamoyl phosphate: step 1/3. Reversibly inhibited by inhibited by phaseolotoxin and octicidine. Its function is as follows. Reversibly catalyzes the transfer of the carbamoyl group from carbamoyl phosphate (CP) to the N(epsilon) atom of ornithine (ORN) to produce L-citrulline, which is a substrate for argininosuccinate synthetase, the enzyme involved in the final step in arginine biosynthesis. This is Ornithine carbamoyltransferase 1, anabolic from Pseudomonas savastanoi pv. phaseolicola (Pseudomonas syringae pv. phaseolicola).